The sequence spans 88 residues: Acyl carrier protein (88 aa).

Positions D4–M79 constitute a Carrier domain. An O-(pantetheine 4'-phosphoryl)serine modification is found at S39.

Belongs to the acyl carrier protein (ACP) family. 4'-phosphopantetheine is transferred from CoA to a specific serine of apo-ACP by AcpS. This modification is essential for activity because fatty acids are bound in thioester linkage to the sulfhydryl of the prosthetic group.

It localises to the cytoplasm. It functions in the pathway lipid metabolism; fatty acid biosynthesis. Carrier of the growing fatty acid chain in fatty acid biosynthesis. The protein is Acyl carrier protein of Trichodesmium erythraeum (strain IMS101).